A 429-amino-acid chain; its full sequence is Adenylosuccinate synthetase (429 aa).

Residues 12 to 18 (GDEGKGK) and 40 to 42 (GHT) contribute to the GTP site. The active-site Proton acceptor is D13. The Mg(2+) site is built by D13 and G40. IMP-binding positions include 13 to 16 (DEGK), 38 to 41 (NAGH), T129, R143, Q223, T238, and R302. The active-site Proton donor is the H41. Residue 298 to 304 (VVTGRKR) coordinates substrate. Residues R304, 330–332 (KLD), and 412–414 (STS) each bind GTP.

The protein belongs to the adenylosuccinate synthetase family. In terms of assembly, homodimer. Mg(2+) is required as a cofactor.

It is found in the cytoplasm. The catalysed reaction is IMP + L-aspartate + GTP = N(6)-(1,2-dicarboxyethyl)-AMP + GDP + phosphate + 2 H(+). Its pathway is purine metabolism; AMP biosynthesis via de novo pathway; AMP from IMP: step 1/2. Plays an important role in the de novo pathway of purine nucleotide biosynthesis. Catalyzes the first committed step in the biosynthesis of AMP from IMP. This Brucella ovis (strain ATCC 25840 / 63/290 / NCTC 10512) protein is Adenylosuccinate synthetase.